We begin with the raw amino-acid sequence, 550 residues long: Chaperonin GroEL (550 aa).

Residues Thr30–Pro33, Lys51, Asp87–Thr91, Gly416, Asn480–Ala482, and Asp496 contribute to the ATP site. Residues Leu525 to Met550 form a disordered region. Over residues Gly534–Met550 the composition is skewed to gly residues.

Belongs to the chaperonin (HSP60) family. In terms of assembly, forms a cylinder of 14 subunits composed of two heptameric rings stacked back-to-back. Interacts with the co-chaperonin GroES.

Its subcellular location is the cytoplasm. It carries out the reaction ATP + H2O + a folded polypeptide = ADP + phosphate + an unfolded polypeptide.. Together with its co-chaperonin GroES, plays an essential role in assisting protein folding. The GroEL-GroES system forms a nano-cage that allows encapsulation of the non-native substrate proteins and provides a physical environment optimized to promote and accelerate protein folding. The protein is Chaperonin GroEL of Halorhodospira halophila (strain DSM 244 / SL1) (Ectothiorhodospira halophila (strain DSM 244 / SL1)).